The following is a 644-amino-acid chain: Chaperone protein HtpG (644 aa).

Residues 1–352 (MNARVEQLEF…AQDMSLNVSR (352 aa)) form an a; substrate-binding region. A b region spans residues 353-566 (EILQQDRQIK…AFGITPALAR (214 aa)). Residues 567 to 644 (LYRASGQDIP…ILADRLARTL (78 aa)) are c.

Belongs to the heat shock protein 90 family. As to quaternary structure, homodimer.

It localises to the cytoplasm. In terms of biological role, molecular chaperone. Has ATPase activity. The sequence is that of Chaperone protein HtpG from Mycolicibacterium paratuberculosis (strain ATCC BAA-968 / K-10) (Mycobacterium paratuberculosis).